We begin with the raw amino-acid sequence, 41 residues long: uncharacterized protein (41 aa).

An N-terminal signal peptide occupies residues 1-23 (MNFLMRAIFSLLLLFTLSIPVIS).

This is an uncharacterized protein from Escherichia coli (strain K12).